Consider the following 390-residue polypeptide: uncharacterized protein (390 aa).

Transmembrane regions (helical) follow at residues 27–47 (GGLI…MEWI) and 356–376 (FGGF…LASF).

Belongs to the ERGIC family.

Its subcellular location is the membrane. This is an uncharacterized protein from Schizosaccharomyces pombe (strain 972 / ATCC 24843) (Fission yeast).